The following is a 135-amino-acid chain: Small ribosomal subunit protein uS12 (135 aa).

3-methylthioaspartic acid is present on Asp-89. Residues 101–135 are disordered; sequence SLDTSGVADRKQSRSKYGAKQPKAGAAAPVKGKRR. Low complexity predominate over residues 116–135; the sequence is KYGAKQPKAGAAAPVKGKRR.

The protein belongs to the universal ribosomal protein uS12 family. Part of the 30S ribosomal subunit. Contacts proteins S8 and S17. May interact with IF1 in the 30S initiation complex.

Functionally, with S4 and S5 plays an important role in translational accuracy. Interacts with and stabilizes bases of the 16S rRNA that are involved in tRNA selection in the A site and with the mRNA backbone. Located at the interface of the 30S and 50S subunits, it traverses the body of the 30S subunit contacting proteins on the other side and probably holding the rRNA structure together. The combined cluster of proteins S8, S12 and S17 appears to hold together the shoulder and platform of the 30S subunit. The chain is Small ribosomal subunit protein uS12 from Chlorobium phaeobacteroides (strain DSM 266 / SMG 266 / 2430).